Here is a 493-residue protein sequence, read N- to C-terminus: UDP-N-acetylmuramoyl-L-alanyl-D-glutamate--2,6-diaminopimelate ligase (493 aa).

Ser-30 lines the UDP-N-acetyl-alpha-D-muramoyl-L-alanyl-D-glutamate pocket. An ATP-binding site is contributed by 114–120 (GTNGKTS). UDP-N-acetyl-alpha-D-muramoyl-L-alanyl-D-glutamate contacts are provided by residues 156–157 (TT), Ser-183, Gln-189, and Arg-191. Lys-223 is subject to N6-carboxylysine. Residues Arg-386, 410-413 (DNPR), Gly-460, and Glu-464 contribute to the meso-2,6-diaminopimelate site. The Meso-diaminopimelate recognition motif signature appears at 410 to 413 (DNPR).

This sequence belongs to the MurCDEF family. MurE subfamily. The cofactor is Mg(2+). Carboxylation is probably crucial for Mg(2+) binding and, consequently, for the gamma-phosphate positioning of ATP.

The protein localises to the cytoplasm. It carries out the reaction UDP-N-acetyl-alpha-D-muramoyl-L-alanyl-D-glutamate + meso-2,6-diaminopimelate + ATP = UDP-N-acetyl-alpha-D-muramoyl-L-alanyl-gamma-D-glutamyl-meso-2,6-diaminopimelate + ADP + phosphate + H(+). The protein operates within cell wall biogenesis; peptidoglycan biosynthesis. In terms of biological role, catalyzes the addition of meso-diaminopimelic acid to the nucleotide precursor UDP-N-acetylmuramoyl-L-alanyl-D-glutamate (UMAG) in the biosynthesis of bacterial cell-wall peptidoglycan. The sequence is that of UDP-N-acetylmuramoyl-L-alanyl-D-glutamate--2,6-diaminopimelate ligase from Chromobacterium violaceum (strain ATCC 12472 / DSM 30191 / JCM 1249 / CCUG 213 / NBRC 12614 / NCIMB 9131 / NCTC 9757 / MK).